A 341-amino-acid polypeptide reads, in one-letter code: Tetraacyldisaccharide 4'-kinase (341 aa).

An ATP-binding site is contributed by 54 to 61; it reads TVGGAGKT.

The protein belongs to the LpxK family.

The enzyme catalyses a lipid A disaccharide + ATP = a lipid IVA + ADP + H(+). The protein operates within glycolipid biosynthesis; lipid IV(A) biosynthesis; lipid IV(A) from (3R)-3-hydroxytetradecanoyl-[acyl-carrier-protein] and UDP-N-acetyl-alpha-D-glucosamine: step 6/6. In terms of biological role, transfers the gamma-phosphate of ATP to the 4'-position of a tetraacyldisaccharide 1-phosphate intermediate (termed DS-1-P) to form tetraacyldisaccharide 1,4'-bis-phosphate (lipid IVA). The polypeptide is Tetraacyldisaccharide 4'-kinase (Brucella melitensis biotype 2 (strain ATCC 23457)).